Consider the following 122-residue polypeptide: Small ribosomal subunit protein uS13 (122 aa).

The disordered stretch occupies residues 93–122 (RRGLPVRGQNTKTNARTRKGPKRTAGGKKK). The segment covering 107–122 (ARTRKGPKRTAGGKKK) has biased composition (basic residues).

The protein belongs to the universal ribosomal protein uS13 family. In terms of assembly, part of the 30S ribosomal subunit. Forms a loose heterodimer with protein S19. Forms two bridges to the 50S subunit in the 70S ribosome.

In terms of biological role, located at the top of the head of the 30S subunit, it contacts several helices of the 16S rRNA. In the 70S ribosome it contacts the 23S rRNA (bridge B1a) and protein L5 of the 50S subunit (bridge B1b), connecting the 2 subunits; these bridges are implicated in subunit movement. Contacts the tRNAs in the A and P-sites. The polypeptide is Small ribosomal subunit protein uS13 (Syntrophomonas wolfei subsp. wolfei (strain DSM 2245B / Goettingen)).